Here is a 234-residue protein sequence, read N- to C-terminus: MRLVQLSRHSIAFPSPEGALREPNGLLALGGDLSPARLLMAYQRGIFPWFSPGDPILWWSPDPRAVLWPESLHISRSMKRFHKRSPYRVTMNYAFGQVIEGCASDREEGTWITRGVVEAYHRLHELGHAHSIEVWREDELVGGMYGVAQGTLFCGESMFSRMENASKTALLVFCDEFIRHGGKLIDCQVLNDHTASLGACEIPRRDYLNYLNQMRLGRLPNNFWVPRCLFSPQE.

It belongs to the L/F-transferase family.

It localises to the cytoplasm. It carries out the reaction N-terminal L-lysyl-[protein] + L-leucyl-tRNA(Leu) = N-terminal L-leucyl-L-lysyl-[protein] + tRNA(Leu) + H(+). It catalyses the reaction N-terminal L-arginyl-[protein] + L-leucyl-tRNA(Leu) = N-terminal L-leucyl-L-arginyl-[protein] + tRNA(Leu) + H(+). The enzyme catalyses L-phenylalanyl-tRNA(Phe) + an N-terminal L-alpha-aminoacyl-[protein] = an N-terminal L-phenylalanyl-L-alpha-aminoacyl-[protein] + tRNA(Phe). Its function is as follows. Functions in the N-end rule pathway of protein degradation where it conjugates Leu, Phe and, less efficiently, Met from aminoacyl-tRNAs to the N-termini of proteins containing an N-terminal arginine or lysine. The sequence is that of Leucyl/phenylalanyl-tRNA--protein transferase from Escherichia coli O45:K1 (strain S88 / ExPEC).